The sequence spans 259 residues: Large ribosomal subunit protein uL3c (259 aa).

The N-terminal 37 residues, 1-37 (LKTTPLTLRSPFLHRLPLRALKTHKPTSLHISKSSIS), are a transit peptide targeting the chloroplast. The interval 176-211 (MTHGSKSHRQLGSIGAGTTPGRVYKGKKMPGRMGGT) is disordered. A compositionally biased stretch (basic residues) spans 199 to 211 (YKGKKMPGRMGGT).

Belongs to the universal ribosomal protein uL3 family. Part of the 50S ribosomal subunit.

The protein resides in the plastid. It localises to the chloroplast. One of the primary rRNA binding proteins, it binds directly near the 3'-end of the 23S rRNA, where it nucleates assembly of the 50S subunit. The sequence is that of Large ribosomal subunit protein uL3c (RPL3) from Nicotiana tabacum (Common tobacco).